Consider the following 347-residue polypeptide: Nod factor export ATP-binding protein I (347 aa).

Residues M1 to R11 show a composition bias toward basic and acidic residues. The tract at residues M1 to I32 is disordered. A compositionally biased stretch (polar residues) spans M17 to S26. The 231-residue stretch at I49–Y279 folds into the ABC transporter domain. G81–S88 contacts ATP.

This sequence belongs to the ABC transporter superfamily. Lipooligosaccharide exporter (TC 3.A.1.102) family. As to quaternary structure, the complex is composed of two ATP-binding proteins (NodI) and two transmembrane proteins (NodJ).

It is found in the cell inner membrane. Part of the ABC transporter complex NodIJ involved in the export of the nodulation factors (Nod factors), the bacterial signal molecules that induce symbiosis and subsequent nodulation induction. Nod factors are LCO (lipo-chitin oligosaccharide), a modified beta-1,4-linked N-acetylglucosamine oligosaccharide. This subunit is responsible for energy coupling to the transport system. The sequence is that of Nod factor export ATP-binding protein I from Neorhizobium galegae (Rhizobium galegae).